A 688-amino-acid polypeptide reads, in one-letter code: Eukaryotic translation initiation factor 3 subunit B (688 aa).

The tract at residues 1-28 (MAKKKGDQYDSDGAEDQDYDEEPVFEDP) is disordered. Over residues 9 to 25 (YDSDGAEDQDYDEEPVF) the composition is skewed to acidic residues. In terms of domain architecture, RRM spans 57–141 (NVIVVDNIPV…HTLLVNLFSD (85 aa)). WD repeat units follow at residues 208-246 (RERF…KINK), 247-287 (FAHS…EKRS), 291-329 (DGSS…LLDK), 332-367 (IKVQ…TLLE), 440-482 (EVKE…EPTM), and 527-572 (GDHY…KRVN). A coiled-coil region spans residues 612-643 (DRVRMTRASKELLEKRAKLREQFVEYRAKRVN).

Belongs to the eIF-3 subunit B family. In terms of assembly, component of the eukaryotic translation initiation factor 3 (eIF-3) complex.

It is found in the cytoplasm. RNA-binding component of the eukaryotic translation initiation factor 3 (eIF-3) complex, which is involved in protein synthesis of a specialized repertoire of mRNAs and, together with other initiation factors, stimulates binding of mRNA and methionyl-tRNAi to the 40S ribosome. The eIF-3 complex specifically targets and initiates translation of a subset of mRNAs involved in cell proliferation. In Culex quinquefasciatus (Southern house mosquito), this protein is Eukaryotic translation initiation factor 3 subunit B.